The following is a 276-amino-acid chain: Diaminopimelate epimerase (276 aa).

Substrate-binding residues include N13, Q46, and N66. Catalysis depends on C75, which acts as the Proton donor. Residues 76 to 77, N159, N192, and 210 to 211 contribute to the substrate site; these read GN and ER. C219 acts as the Proton acceptor in catalysis. 220–221 serves as a coordination point for substrate; the sequence is GS.

This sequence belongs to the diaminopimelate epimerase family. As to quaternary structure, homodimer.

The protein resides in the cytoplasm. It carries out the reaction (2S,6S)-2,6-diaminopimelate = meso-2,6-diaminopimelate. It participates in amino-acid biosynthesis; L-lysine biosynthesis via DAP pathway; DL-2,6-diaminopimelate from LL-2,6-diaminopimelate: step 1/1. In terms of biological role, catalyzes the stereoinversion of LL-2,6-diaminopimelate (L,L-DAP) to meso-diaminopimelate (meso-DAP), a precursor of L-lysine and an essential component of the bacterial peptidoglycan. The polypeptide is Diaminopimelate epimerase (Aliivibrio fischeri (strain ATCC 700601 / ES114) (Vibrio fischeri)).